The primary structure comprises 24 residues: FLPIIASVAAKVFPKIFCAISKKC.

The cysteines at positions 18 and 24 are disulfide-linked.

In terms of tissue distribution, expressed by the skin glands.

It is found in the secreted. In terms of biological role, antibacterial activity against Gram-positive bacterium S.aureus and Gram-negative bacterium E.coli. Has activity against C.albicans. This is Brevinin-1Pe from Lithobates pipiens (Northern leopard frog).